The chain runs to 247 residues: ATP synthase subunit a, chloroplastic (247 aa).

5 helical membrane passes run 28–48 (GQVL…CLLG), 95–115 (VPFL…GALI), 134–154 (INTT…AGIS), 199–219 (LVVG…IMLL), and 220–240 (GLFT…AYIG).

Belongs to the ATPase A chain family. F-type ATPases have 2 components, CF(1) - the catalytic core - and CF(0) - the membrane proton channel. CF(1) has five subunits: alpha(3), beta(3), gamma(1), delta(1), epsilon(1). CF(0) has four main subunits: a, b, b' and c.

It is found in the plastid. It localises to the chloroplast thylakoid membrane. Key component of the proton channel; it plays a direct role in the translocation of protons across the membrane. In Chlorella vulgaris (Green alga), this protein is ATP synthase subunit a, chloroplastic.